Reading from the N-terminus, the 149-residue chain is Stathmin (149 aa).

Ala-2 carries the N-acetylalanine modification. Ser-4 bears the Phosphoserine mark. Residues 4-145 enclose the SLD domain; that stretch reads SDIQVKELEK…NKESKDPADE (142 aa). N6-acetyllysine is present on Lys-9. Ser-16 carries the post-translational modification Phosphoserine. Residue Ser-25 is modified to Phosphoserine; by CDK1, MAPK1 and MAPK3. The residue at position 29 (Lys-29) is an N6-methyllysine. A Phosphoserine modification is found at Ser-31. A Phosphoserine; by CDK1, MAPK1 and MAPK3 modification is found at Ser-38. Residues 41–140 are a coiled coil; it reads KKKDLSLEEI…EEVRKNKESK (100 aa). Phosphoserine; by PKA is present on Ser-63. Residues Lys-100 and Lys-119 each carry the N6-acetyllysine modification. Positions 121 to 143 are enriched in basic and acidic residues; the sequence is ERLREKDKHIEEVRKNKESKDPA. The disordered stretch occupies residues 121–149; sequence ERLREKDKHIEEVRKNKESKDPADETEAD.

Belongs to the stathmin family. Binds to two alpha/beta-tubulin heterodimers. Interacts with KIST. Post-translationally, many different phosphorylated forms are observed depending on specific combinations among the sites which can be phosphorylated. MAPK is responsible for the phosphorylation of stathmin in response to NGF. Phosphorylation at Ser-16 seems to be required for neuron polarization.

The protein localises to the cytoplasm. It is found in the cytoskeleton. Involved in the regulation of the microtubule (MT) filament system by destabilizing microtubules. Prevents assembly and promotes disassembly of microtubules. Its phosphorylation at Ser-16 may be required for axon formation during neurogenesis. Involved in the control of the learned and innate fear. This is Stathmin (STMN1) from Bos taurus (Bovine).